Here is a 569-residue protein sequence, read N- to C-terminus: Proline--tRNA ligase (569 aa).

This sequence belongs to the class-II aminoacyl-tRNA synthetase family. ProS type 1 subfamily. As to quaternary structure, homodimer.

The protein resides in the cytoplasm. It carries out the reaction tRNA(Pro) + L-proline + ATP = L-prolyl-tRNA(Pro) + AMP + diphosphate. Its function is as follows. Catalyzes the attachment of proline to tRNA(Pro) in a two-step reaction: proline is first activated by ATP to form Pro-AMP and then transferred to the acceptor end of tRNA(Pro). As ProRS can inadvertently accommodate and process non-cognate amino acids such as alanine and cysteine, to avoid such errors it has two additional distinct editing activities against alanine. One activity is designated as 'pretransfer' editing and involves the tRNA(Pro)-independent hydrolysis of activated Ala-AMP. The other activity is designated 'posttransfer' editing and involves deacylation of mischarged Ala-tRNA(Pro). The misacylated Cys-tRNA(Pro) is not edited by ProRS. The protein is Proline--tRNA ligase of Campylobacter jejuni subsp. jejuni serotype O:2 (strain ATCC 700819 / NCTC 11168).